Consider the following 404-residue polypeptide: Cysteine desulfurase IscS (404 aa).

Pyridoxal 5'-phosphate-binding positions include 75–76 (AT), asparagine 155, glutamine 183, and 203–205 (SGH). Residue lysine 206 is modified to N6-(pyridoxal phosphate)lysine. Threonine 243 provides a ligand contact to pyridoxal 5'-phosphate. Cysteine 328 serves as the catalytic Cysteine persulfide intermediate. Residue cysteine 328 participates in [2Fe-2S] cluster binding.

The protein belongs to the class-V pyridoxal-phosphate-dependent aminotransferase family. NifS/IscS subfamily. As to quaternary structure, homodimer. Forms a heterotetramer with IscU, interacts with other sulfur acceptors. Pyridoxal 5'-phosphate is required as a cofactor.

It localises to the cytoplasm. The catalysed reaction is (sulfur carrier)-H + L-cysteine = (sulfur carrier)-SH + L-alanine. The protein operates within cofactor biosynthesis; iron-sulfur cluster biosynthesis. Its function is as follows. Master enzyme that delivers sulfur to a number of partners involved in Fe-S cluster assembly, tRNA modification or cofactor biosynthesis. Catalyzes the removal of elemental sulfur atoms from cysteine to produce alanine. Functions as a sulfur delivery protein for Fe-S cluster synthesis onto IscU, an Fe-S scaffold assembly protein, as well as other S acceptor proteins. In Shewanella amazonensis (strain ATCC BAA-1098 / SB2B), this protein is Cysteine desulfurase IscS.